The chain runs to 27 residues: uncharacterized protein (27 aa).

It is found in the plastid. The protein localises to the cyanelle. This is an uncharacterized protein from Cyanophora paradoxa.